The chain runs to 233 residues: Riboflavin kinase (233 aa).

Residues 1–99 (MSGATSTGDV…YRRIFEDPGE (99 aa)) are unknown. Residues 100-233 (LALAGTVTSG…DDEVTIRVEA (134 aa)) form a riboflavin kinase region. Residue 109-114 (GMGEGR) participates in CDP binding. Mg(2+)-binding residues include threonine 138 and asparagine 140. Threonine 200 and glutamate 208 together coordinate FMN. 213 to 216 (VKLR) is a CDP binding site.

This sequence belongs to the archaeal riboflavin kinase family. Requires Mg(2+) as cofactor.

The enzyme catalyses riboflavin + CTP = CDP + FMN + H(+). It functions in the pathway cofactor biosynthesis; FMN biosynthesis; FMN from riboflavin (CTP route): step 1/1. In terms of biological role, catalyzes the CTP-dependent phosphorylation of riboflavin (vitamin B2) to form flavin mononucleotide (FMN). In Halobacterium salinarum (strain ATCC 700922 / JCM 11081 / NRC-1) (Halobacterium halobium), this protein is Riboflavin kinase (ribK).